Reading from the N-terminus, the 711-residue chain is MLNPIVRKFQYGQHTVTLETGIMARQATAAVMVSMDDTAVFVTVVGQKKAKPGQDFFPLTVNYQERTYAAGRIPGSFFRREGRPSEGETLIARLIDRPIRPLFPEGFVNEVQVIATVVSVNPQVNPDIVAMIGASAALSLSGIPFNGPIGAARVGYINDQYVLNPTQDELKESKLDLVVAGTEAAVLMVESEAELLSEDQMLGAVVFGHEQQQVVIQNINELVKEAGKPRWDWQPEPVNEALNARVAALAEARLSDAYRITDKQERYAQVDVIKSETIATLLAEDETLDENELGEILHAIEKNVVRSRVLAGEPRIDGREKDMIRGLDVRTGVLPRTHGSALFTRGETQALVTATLGTARDAQVLDELMGERTDTFLFHYNFPPYSVGETGMVGSPKRREIGHGRLAKRGVLAVMPDMDKFPYTVRVVSEITESNGSSSMASVCGASLALMDAGVPIKAAVAGIAMGLVKEGDNYVVLSDILGDEDHLGDMDFKVAGSRDGISALQMDIKIEGITKEIMQVALNQAKGARLHILGVMEQAINAPRGDISEFAPRIHTIKINPDKIKDVIGKGGSVIRALTEETGTTIEIEDDGTVKIAATDGEKAKHAIRRIEEITAEIEVGRVYTGKVTRIVDFGAFVAIGGGKEGLVHISQIADKRVEKVTDYLQMGQEVPVKVLEVDRQGRIRLSIKEATEQSQPAAAPEAPAAEQGE.

The Mg(2+) site is built by Asp-486 and Asp-492. The KH domain occupies 553-612 (PRIHTIKINPDKIKDVIGKGGSVIRALTEETGTTIEIEDDGTVKIAATDGEKAKHAIRRI). Positions 622–690 (GRVYTGKVTR…RQGRIRLSIK (69 aa)) constitute an S1 motif domain. The disordered stretch occupies residues 689 to 711 (IKEATEQSQPAAAPEAPAAEQGE). The span at 694-711 (EQSQPAAAPEAPAAEQGE) shows a compositional bias: low complexity.

It belongs to the polyribonucleotide nucleotidyltransferase family. In terms of assembly, component of the RNA degradosome, which is a multiprotein complex involved in RNA processing and mRNA degradation. Mg(2+) serves as cofactor.

Its subcellular location is the cytoplasm. The enzyme catalyses RNA(n+1) + phosphate = RNA(n) + a ribonucleoside 5'-diphosphate. Functionally, involved in mRNA degradation. Catalyzes the phosphorolysis of single-stranded polyribonucleotides processively in the 3'- to 5'-direction. The sequence is that of Polyribonucleotide nucleotidyltransferase from Escherichia coli (strain ATCC 8739 / DSM 1576 / NBRC 3972 / NCIMB 8545 / WDCM 00012 / Crooks).